The following is a 283-amino-acid chain: Thymidylate synthase (283 aa).

Residue Arg22 coordinates dUMP. Cys160 acts as the Nucleophile in catalysis. Residues Arg180–Asp183, Asn191, and His221–Tyr223 each bind dUMP. Asp183 is a binding site for (6R)-5,10-methylene-5,6,7,8-tetrahydrofolate. Ala282 contacts (6R)-5,10-methylene-5,6,7,8-tetrahydrofolate.

Belongs to the thymidylate synthase family. Bacterial-type ThyA subfamily. As to quaternary structure, homodimer.

The protein resides in the cytoplasm. It catalyses the reaction dUMP + (6R)-5,10-methylene-5,6,7,8-tetrahydrofolate = 7,8-dihydrofolate + dTMP. It functions in the pathway pyrimidine metabolism; dTTP biosynthesis. Its function is as follows. Catalyzes the reductive methylation of 2'-deoxyuridine-5'-monophosphate (dUMP) to 2'-deoxythymidine-5'-monophosphate (dTMP) while utilizing 5,10-methylenetetrahydrofolate (mTHF) as the methyl donor and reductant in the reaction, yielding dihydrofolate (DHF) as a by-product. This enzymatic reaction provides an intracellular de novo source of dTMP, an essential precursor for DNA biosynthesis. The chain is Thymidylate synthase from Idiomarina loihiensis (strain ATCC BAA-735 / DSM 15497 / L2-TR).